Here is a 352-residue protein sequence, read N- to C-terminus: Fe-S cluster assembly protein DRE2 (352 aa).

Positions 1–11 are enriched in polar residues; sequence MAPTAVYTQKD. Positions 1–24 are disordered; the sequence is MAPTAVYTQKDSPSSSQPSSKGPA. Residues 1 to 196 form an N-terminal SAM-like domain region; sequence MAPTAVYTQK…TVTSAPSVPL (196 aa). The linker stretch occupies residues 196–237; it reads LLLRKRGDPAKKKALWALTTDASASPSTKIDADALLTAEDKA. [2Fe-2S] cluster contacts are provided by Cys243, Cys257, Cys260, and Cys262. Residues 243–262 are fe-S binding site A; that stretch reads CAPVDRSAPRRKKACKNCSC. [4Fe-4S] cluster-binding residues include Cys315, Cys318, Cys326, and Cys329. 2 short sequence motifs (cx2C motif) span residues 315-318 and 326-329; these read CGSC and CAGC. Residues 315 to 329 form a fe-S binding site B region; sequence CGSCFLGDAFRCAGC.

The protein belongs to the anamorsin family. In terms of assembly, monomer. Interacts with TAH18. Interacts with MIA40. [2Fe-2S] cluster is required as a cofactor. Requires [4Fe-4S] cluster as cofactor.

Its subcellular location is the cytoplasm. The protein resides in the mitochondrion intermembrane space. Functionally, component of the cytosolic iron-sulfur (Fe-S) protein assembly (CIA) machinery required for the maturation of extramitochondrial Fe-S proteins. Part of an electron transfer chain functioning in an early step of cytosolic Fe-S biogenesis, facilitating the de novo assembly of a [4Fe-4S] cluster on the scaffold complex CFD1-NBP35. Electrons are transferred to DRE2 from NADPH via the FAD- and FMN-containing protein TAH18. TAH18-DRE2 are also required for the assembly of the diferric tyrosyl radical cofactor of ribonucleotide reductase (RNR), probably by providing electrons for reduction during radical cofactor maturation in the catalytic small subunit RNR2. In Coprinopsis cinerea (strain Okayama-7 / 130 / ATCC MYA-4618 / FGSC 9003) (Inky cap fungus), this protein is Fe-S cluster assembly protein DRE2.